A 448-amino-acid polypeptide reads, in one-letter code: Probable glycine dehydrogenase (decarboxylating) subunit 1 (448 aa).

Belongs to the GcvP family. N-terminal subunit subfamily. The glycine cleavage system is composed of four proteins: P, T, L and H. In this organism, the P 'protein' is a heterodimer of two subunits.

The enzyme catalyses N(6)-[(R)-lipoyl]-L-lysyl-[glycine-cleavage complex H protein] + glycine + H(+) = N(6)-[(R)-S(8)-aminomethyldihydrolipoyl]-L-lysyl-[glycine-cleavage complex H protein] + CO2. The glycine cleavage system catalyzes the degradation of glycine. The P protein binds the alpha-amino group of glycine through its pyridoxal phosphate cofactor; CO(2) is released and the remaining methylamine moiety is then transferred to the lipoamide cofactor of the H protein. In Lysinibacillus sphaericus (strain C3-41), this protein is Probable glycine dehydrogenase (decarboxylating) subunit 1.